The chain runs to 254 residues: Triosephosphate isomerase (254 aa).

9–11 (NWK) provides a ligand contact to substrate. The active-site Electrophile is the histidine 95. Glutamate 167 functions as the Proton acceptor in the catalytic mechanism. Residues glycine 173, serine 213, and 234-235 (GG) each bind substrate.

This sequence belongs to the triosephosphate isomerase family. Homodimer.

It is found in the cytoplasm. It carries out the reaction D-glyceraldehyde 3-phosphate = dihydroxyacetone phosphate. Its pathway is carbohydrate biosynthesis; gluconeogenesis. It functions in the pathway carbohydrate degradation; glycolysis; D-glyceraldehyde 3-phosphate from glycerone phosphate: step 1/1. Involved in the gluconeogenesis. Catalyzes stereospecifically the conversion of dihydroxyacetone phosphate (DHAP) to D-glyceraldehyde-3-phosphate (G3P). This is Triosephosphate isomerase from Roseiflexus sp. (strain RS-1).